Here is a 187-residue protein sequence, read N- to C-terminus: Calmodulin-like protein 30 (187 aa).

The tract at residues K21 to S47 is disordered. Low complexity predominate over residues S32–S47. 4 EF-hand domains span residues P46 to E81, R82 to I117, F129 to R152, and C153 to V187. The Ca(2+) site is built by D59, D61, D63, K65, E70, D95, D97, D99, E106, D130, N132, D134, K136, E141, D166, D168, D170, and E177.

It belongs to the calmodulin family.

Its function is as follows. Potential calcium sensor. The polypeptide is Calmodulin-like protein 30 (Arabidopsis thaliana (Mouse-ear cress)).